A 1182-amino-acid chain; its full sequence is CRISPR-associated endoribonuclease Cas13a (1182 aa).

The stretch at Phe-132–Gln-279 forms a coiled coil. Residues Tyr-366–Ile-508 are HEPN-like fold 1. Residues Lys-896–Glu-955 adopt a coiled-coil conformation. Residues Leu-965–Thr-1120 are HEPN-like fold 2.

The protein belongs to the CRISPR-associated endoribonuclease Cas13a family. A divalent metal cation is required as a cofactor.

Its activity is regulated as follows. Target RNA acts as an activator for non-specific ssRNA degradation. Its function is as follows. CRISPR (clustered regularly interspaced short palindromic repeat), is an adaptive immune system that provides protection against mobile genetic elements (viruses, transposable elements and conjugative plasmids). CRISPR clusters contain sequences complementary to antecedent mobile elements and target invading nucleic acids. Unlike many single-component effectors, this CRISPR-Cas system targets RNA. CRISPR clusters are transcribed from pre-CRISPR RNA (crRNA) and processed into crRNA by this protein. Cleaves linear target ssRNA in a pre-crRNA-dependent fashion, preferentially before U residues. Binding a viable target RNA target activates this protein for non-specific RNA degradation in vitro (called collateral RNA degradation), which is fairly sensitive as it requires picomolar levels of viable target RNA. The chain is CRISPR-associated endoribonuclease Cas13a from Leptotrichia wadei (strain F0279).